We begin with the raw amino-acid sequence, 316 residues long: Short-chain dehydrogenase/reductase family 16C member 6 (316 aa).

40-64 (LITGAASGLGRLLAIKFASLGAILV) contacts NAD(+). Ser173 serves as a coordination point for substrate. Catalysis depends on Tyr186, which acts as the Proton acceptor.

Belongs to the short-chain dehydrogenases/reductases (SDR) family.

The sequence is that of Short-chain dehydrogenase/reductase family 16C member 6 (SDR16C6) from Bos taurus (Bovine).